The chain runs to 688 residues: Glycine--tRNA ligase beta subunit (688 aa).

Belongs to the class-II aminoacyl-tRNA synthetase family. In terms of assembly, tetramer of two alpha and two beta subunits.

It localises to the cytoplasm. It catalyses the reaction tRNA(Gly) + glycine + ATP = glycyl-tRNA(Gly) + AMP + diphosphate. This is Glycine--tRNA ligase beta subunit from Syntrophomonas wolfei subsp. wolfei (strain DSM 2245B / Goettingen).